A 217-amino-acid polypeptide reads, in one-letter code: Tectonin-1 (217 aa).

Tandem repeats lie at residues 2–37, 38–74, 75–111, 112–146, 147–182, and 183–217. Residues 2–217 are 6 X approximate tandem repeats; that stretch reads VHWEKHEGEL…KLHHIYKATL (216 aa).

Belongs to the tectonin family.

The protein resides in the cell surface. It is found in the cytoplasmic vesicle membrane. Probably involved in bacterial recognition. May be a lectin that function as part of a transmembrane signaling complex during phagocytosis. This is Tectonin-1 (TECA) from Physarum polycephalum (Slime mold).